The primary structure comprises 433 residues: Histidine--tRNA ligase (433 aa).

The protein belongs to the class-II aminoacyl-tRNA synthetase family. In terms of assembly, homodimer.

The protein localises to the cytoplasm. It catalyses the reaction tRNA(His) + L-histidine + ATP = L-histidyl-tRNA(His) + AMP + diphosphate + H(+). The chain is Histidine--tRNA ligase from Crocosphaera subtropica (strain ATCC 51142 / BH68) (Cyanothece sp. (strain ATCC 51142)).